A 313-amino-acid polypeptide reads, in one-letter code: Porphobilinogen deaminase (313 aa).

Residue Cys-242 is modified to S-(dipyrrolylmethanemethyl)cysteine.

The protein belongs to the HMBS family. Monomer. Requires dipyrromethane as cofactor.

The catalysed reaction is 4 porphobilinogen + H2O = hydroxymethylbilane + 4 NH4(+). Its pathway is porphyrin-containing compound metabolism; protoporphyrin-IX biosynthesis; coproporphyrinogen-III from 5-aminolevulinate: step 2/4. Its function is as follows. Tetrapolymerization of the monopyrrole PBG into the hydroxymethylbilane pre-uroporphyrinogen in several discrete steps. This is Porphobilinogen deaminase from Erwinia tasmaniensis (strain DSM 17950 / CFBP 7177 / CIP 109463 / NCPPB 4357 / Et1/99).